The sequence spans 436 residues: Prenyltransferase nscD (436 aa).

It belongs to the tryptophan dimethylallyltransferase family.

Its pathway is secondary metabolite biosynthesis. Prenyltransferase; part of the gene cluster that mediates the biosynthesis of neosartoricin B, a prenylated anthracenone that probably exhibits T-cell antiproliferative activity, suggestive of a physiological role as an immunosuppressive agent. The non-reducing polyketide synthase nscA probably synthesizes and cyclizes the decaketide backbone. The hydrolase nscB then mediates the product release through hydrolysis followed by spontaneous decarboxylation. The prenyltransferase nscD catalyzes the addition of the dimethylallyl group to the aromatic C5. The FAD-dependent monooxygenase nscC is then responsible for the stereospecific hydroxylation at C2. Neosartoricin B can be converted into two additional compounds neosartoricins C and D. Neosartoricin C is a spirocyclic compound that is cyclized through the attack of C3 hydroxyl on C14, followed by dehydration. On the other hand, neosartoricin D is a further cyclized compound in which attack of C2 on C14 in neosartoricin C results in the formation of the acetal-containing dioxabicyclo-octanone ring. Both of these compounds are novel and possibly represent related metabolites of the gene cluster. In Trichophyton equinum (strain ATCC MYA-4606 / CBS 127.97) (Horse ringworm fungus), this protein is Prenyltransferase nscD.